The following is a 539-amino-acid chain: GMP synthase [glutamine-hydrolyzing] (539 aa).

Positions 4-202 constitute a Glutamine amidotransferase type-1 domain; the sequence is KILILDFGSQ…VLDIAGAKPD (199 aa). Cys81 serves as the catalytic Nucleophile. Catalysis depends on residues His176 and Glu178. The 193-residue stretch at 203–395 folds into the GMPS ATP-PPase domain; the sequence is WIMRDHIEEA…LGLPAEMVYR (193 aa). 230–236 contributes to the ATP binding site; it reads SGGVDSS.

In terms of assembly, homodimer.

The catalysed reaction is XMP + L-glutamine + ATP + H2O = GMP + L-glutamate + AMP + diphosphate + 2 H(+). It functions in the pathway purine metabolism; GMP biosynthesis; GMP from XMP (L-Gln route): step 1/1. Its function is as follows. Catalyzes the synthesis of GMP from XMP. In Burkholderia pseudomallei (strain 1106a), this protein is GMP synthase [glutamine-hydrolyzing].